The primary structure comprises 75 residues: MKEGMSNNSTTSISQARKAVEQLKMEACMDRVKVSQAAADLLAYCEAHVREDPLIIPVPASENPFREKKFFCTIL.

C72 is modified (cysteine methyl ester). C72 carries S-geranylgeranyl cysteine lipidation. A propeptide spans 73–75 (removed in mature form); it reads TIL.

It belongs to the G protein gamma family. As to quaternary structure, g proteins are composed of 3 units, alpha, beta and gamma. Interacts with beta-1 and beta-2, but not with beta-3. Interacts with KCNK1. Interacts (via C-terminus) with KCNK2/TREK-1 (via N-terminus); this interaction confers ion selectivity to Cl(-) and L-glutamate. In terms of tissue distribution, brain, kidney, pancreas, skeletal muscle and faintly in cardiac muscle.

Its subcellular location is the cell membrane. Functionally, guanine nucleotide-binding proteins (G proteins) are involved as a modulator or transducer in various transmembrane signaling systems. The beta and gamma chains are required for the GTPase activity, for replacement of GDP by GTP, and for G protein-effector interaction. In Homo sapiens (Human), this protein is Guanine nucleotide-binding protein G(I)/G(S)/G(O) subunit gamma-4 (GNG4).